Consider the following 126-residue polypeptide: C-type natriuretic peptide (126 aa).

An N-terminal signal peptide occupies residues 1–23; sequence MHLSQLIACALLLALLSLRPSEA. The segment at 20–73 is disordered; the sequence is PSEAKPGTPPKVPRTPPGEELADSQAAGGNQKKGDKTPGSGGANLKGDRSRLLR. Residues 24–73 constitute a propeptide that is removed on maturation; sequence KPGTPPKVPRTPPGEELADSQAAGGNQKKGDKTPGSGGANLKGDRSRLLR. Residues 26–35 are compositionally biased toward pro residues; that stretch reads GTPPKVPRTP. A disulfide bridge links cysteine 110 with cysteine 126.

It belongs to the natriuretic peptide family. Post-translationally, degraded by IDE (in vitro).

Its subcellular location is the secreted. Hormone which plays a role in endochondral ossification through regulation of cartilaginous growth plate chondrocytes proliferation and differentiation. May also be vasoactive and natriuretic. Acts by specifically binding and stimulating NPR2 to produce cGMP. Binds the clearance receptor NPR3. This is C-type natriuretic peptide (Nppc) from Mus musculus (Mouse).